Reading from the N-terminus, the 210-residue chain is Small ribosomal subunit protein bS6 (210 aa).

The segment at 99–210 is disordered; that stretch reads PLPTKRNTKS…KDTKEVKEEG (112 aa). The span at 120-210 shows a compositional bias: basic and acidic residues; sequence NDTKEVKEAK…KDTKEVKEEG (91 aa).

The protein belongs to the bacterial ribosomal protein bS6 family.

Functionally, binds together with bS18 to 16S ribosomal RNA. The chain is Small ribosomal subunit protein bS6 from Prochlorococcus marinus (strain SARG / CCMP1375 / SS120).